The sequence spans 535 residues: CTP synthase (535 aa).

Residues 1 to 267 (MTKYIFVTGG…DQIVCDHLKL (267 aa)) are amidoligase domain. Residue Ser-13 coordinates CTP. Ser-13 contributes to the UTP binding site. 14 to 19 (SLGKGI) is a binding site for ATP. Tyr-54 is a binding site for L-glutamine. Asp-71 is a binding site for ATP. 2 residues coordinate Mg(2+): Asp-71 and Glu-141. Residues 148–150 (DIE), 188–193 (KTKPTQ), and Lys-224 each bind CTP. UTP contacts are provided by residues 188-193 (KTKPTQ) and Lys-224. Residue 240-242 (RDA) participates in ATP binding. Positions 292–534 (KIALVGKYVE…VRASITNKES (243 aa)) constitute a Glutamine amidotransferase type-1 domain. Residue Gly-354 participates in L-glutamine binding. Residue Cys-381 is the Nucleophile; for glutamine hydrolysis of the active site. L-glutamine contacts are provided by residues 382 to 385 (LGMQ), Glu-405, and Arg-462. Catalysis depends on residues His-507 and Glu-509.

The protein belongs to the CTP synthase family. In terms of assembly, homotetramer.

The catalysed reaction is UTP + L-glutamine + ATP + H2O = CTP + L-glutamate + ADP + phosphate + 2 H(+). It carries out the reaction L-glutamine + H2O = L-glutamate + NH4(+). The enzyme catalyses UTP + NH4(+) + ATP = CTP + ADP + phosphate + 2 H(+). It participates in pyrimidine metabolism; CTP biosynthesis via de novo pathway; CTP from UDP: step 2/2. With respect to regulation, allosterically activated by GTP, when glutamine is the substrate; GTP has no effect on the reaction when ammonia is the substrate. The allosteric effector GTP functions by stabilizing the protein conformation that binds the tetrahedral intermediate(s) formed during glutamine hydrolysis. Inhibited by the product CTP, via allosteric rather than competitive inhibition. In terms of biological role, catalyzes the ATP-dependent amination of UTP to CTP with either L-glutamine or ammonia as the source of nitrogen. Regulates intracellular CTP levels through interactions with the four ribonucleotide triphosphates. This chain is CTP synthase, found in Bacillus cereus (strain ATCC 10987 / NRS 248).